We begin with the raw amino-acid sequence, 289 residues long: 7-methylguanosine phosphate-specific 5'-nucleotidase (289 aa).

Asp38 (nucleophile) is an active-site residue. Mg(2+)-binding residues include Asp38 and Asp40. The active-site Proton donor is the Asp40. Position 85 (Glu85) interacts with CMP. Glu85 provides a ligand contact to N(7)-methyl-GMP. Residues 153–154 and Lys202 each bind substrate; that span reads SA. A Mg(2+)-binding site is contributed by Asp227.

Belongs to the pyrimidine 5'-nucleotidase family. Monomer.

It localises to the cytoplasm. It carries out the reaction N(7)-methyl-GMP + H2O = N(7)-methylguanosine + phosphate. The enzyme catalyses CMP + H2O = cytidine + phosphate. It catalyses the reaction a ribonucleoside 5'-phosphate + H2O = a ribonucleoside + phosphate. In terms of biological role, specifically hydrolyzes 7-methylguanosine monophosphate (m(7)GMP) to 7-methylguanosine and inorganic phosphate. The specific activity for m(7)GMP may protect cells against undesired salvage of m(7)GMP and its incorporation into nucleic acids. Also has weak activity for CMP. UMP and purine nucleotides are poor substrates. This chain is 7-methylguanosine phosphate-specific 5'-nucleotidase (NT5C3B), found in Gallus gallus (Chicken).